We begin with the raw amino-acid sequence, 381 residues long: Probable cyclic AMP-AMP-GMP nucleotide synthase (381 aa).

GTP is bound by residues Ser53 and Arg56. Residues Asp69 and Asp71 contribute to the active site. Mg(2+) contacts are provided by Asp69 and Asp71. Arg109 lines the GTP pocket. The active site involves Asp121. Mg(2+)-binding residues include Asp121 and Asp196. Residues Arg197, Arg204, Thr205, Gln210, and Arg307 each coordinate GTP. The segment at 348 to 381 is disordered; that stretch reads GTKFPFPGPQGGDRSGGFTAPTQPAEPQKTGRFA.

The protein belongs to the CD-NTase family. D02 subfamily. Requires Mg(2+) as cofactor.

It carries out the reaction GTP + 2 ATP = 3',3',3'-cAAG + 3 diphosphate. In terms of biological role, cyclic nucleotide synthase (second messenger synthase) of a CBASS antivirus system. CBASS (cyclic oligonucleotide-based antiphage signaling system) provides immunity against bacteriophage. The CD-NTase protein synthesizes cyclic nucleotides in response to infection; these serve as specific second messenger signals. The signals activate a diverse range of effectors, leading to bacterial cell death and thus abortive phage infection. Its function is as follows. Cyclic nucleotide synthase, synthesizes a tricyclic nucleotide with AMP and GMP moieties, probably 3',3',3'-cyclic AMP-AMP-GMP (3'3'3'-cAAG). Controls the activity of the associated CBASS effector protein. In Salmonella paratyphi B (Salmonella enterica subsp. enterica serovar Paratyphi B), this protein is Probable cyclic AMP-AMP-GMP nucleotide synthase.